Reading from the N-terminus, the 276-residue chain is Undecaprenyl-diphosphatase 2 (276 aa).

The next 8 membrane-spanning stretches (helical) occupy residues 1–21, 44–64, 87–107, 114–134, 150–170, 190–210, 222–242, and 251–271; these read MSLW…LFPV, QLLP…LWYF, GHLM…GLLL, VFHD…LLWL, LTFK…IPGF, AAEF…LLEL, DALL…RFLM, and LASF…WFMF.

Belongs to the UppP family.

It localises to the cell inner membrane. It catalyses the reaction di-trans,octa-cis-undecaprenyl diphosphate + H2O = di-trans,octa-cis-undecaprenyl phosphate + phosphate + H(+). Catalyzes the dephosphorylation of undecaprenyl diphosphate (UPP). Confers resistance to bacitracin. In Burkholderia thailandensis (strain ATCC 700388 / DSM 13276 / CCUG 48851 / CIP 106301 / E264), this protein is Undecaprenyl-diphosphatase 2.